The primary structure comprises 187 residues: Ion-translocating oxidoreductase complex subunit B (187 aa).

Residues 1-23 form a hydrophobic region; it reads MIAAAASMSALGLGLGYLLGAAA. The 4Fe-4S domain maps to 29–88; the sequence is ETPPIVEEIAKILPGTNCGACGFPGCNGLAEAMAEGNAPVTACTPGGRDVALALAEIVTV. 12 residues coordinate [4Fe-4S] cluster: Cys46, Cys49, Cys54, Cys71, Cys112, Cys115, Cys118, Cys122, Cys142, Cys145, Cys148, and Cys152. 4Fe-4S ferredoxin-type domains lie at 103–132 and 133–162; these read MVAF…GGAK and QIHT…SRVK.

This sequence belongs to the 4Fe4S bacterial-type ferredoxin family. RnfB subfamily. In terms of assembly, the complex is composed of six subunits: RnfA, RnfB, RnfC, RnfD, RnfE and RnfG. Requires [4Fe-4S] cluster as cofactor.

It localises to the cellular chromatophore membrane. Part of a membrane-bound complex that couples electron transfer with translocation of ions across the membrane. Required for nitrogen fixation. Involved in electron transfer to nitrogenase. The protein is Ion-translocating oxidoreductase complex subunit B of Rhodobacter capsulatus (Rhodopseudomonas capsulata).